A 248-amino-acid polypeptide reads, in one-letter code: uncharacterized protein (248 aa).

9–33 lines the NADP(+) pocket; the sequence is IITGASSGIGKATALLLAEKGAKLV. Position 141 (S141) interacts with substrate. Y154 acts as the Proton acceptor in catalysis.

It belongs to the short-chain dehydrogenases/reductases (SDR) family.

This is an uncharacterized protein from Listeria monocytogenes serovar 1/2a (strain ATCC BAA-679 / EGD-e).